A 155-amino-acid chain; its full sequence is Small ribosomal subunit protein uS7cz/uS7cy (155 aa).

It belongs to the universal ribosomal protein uS7 family. Part of the 30S ribosomal subunit.

The protein resides in the plastid. It is found in the chloroplast. One of the primary rRNA binding proteins, it binds directly to 16S rRNA where it nucleates assembly of the head domain of the 30S subunit. The sequence is that of Small ribosomal subunit protein uS7cz/uS7cy (rps7-A) from Coffea arabica (Arabian coffee).